Reading from the N-terminus, the 546-residue chain is CTP synthase (546 aa).

Positions 1–266 (MTTRYIFVTG…DDLVVKRFGL (266 aa)) are amidoligase domain. A CTP-binding site is contributed by Ser14. Residue Ser14 participates in UTP binding. ATP contacts are provided by residues 15 to 20 (SLGKGI) and Asp72. The Mg(2+) site is built by Asp72 and Glu140. CTP contacts are provided by residues 147–149 (DIE), 187–192 (KTKPTQ), and Lys223. UTP contacts are provided by residues 187–192 (KTKPTQ) and Lys223. Residue 239–241 (KDV) coordinates ATP. The 252-residue stretch at 291-542 (VIGMVGKYIE…VAAASAHQKR (252 aa)) folds into the Glutamine amidotransferase type-1 domain. Residue Gly352 coordinates L-glutamine. Cys379 acts as the Nucleophile; for glutamine hydrolysis in catalysis. L-glutamine-binding positions include 380 to 383 (LGMQ), Glu403, and Arg470. Active-site residues include His515 and Glu517.

Belongs to the CTP synthase family. Homotetramer.

It catalyses the reaction UTP + L-glutamine + ATP + H2O = CTP + L-glutamate + ADP + phosphate + 2 H(+). The catalysed reaction is L-glutamine + H2O = L-glutamate + NH4(+). It carries out the reaction UTP + NH4(+) + ATP = CTP + ADP + phosphate + 2 H(+). It functions in the pathway pyrimidine metabolism; CTP biosynthesis via de novo pathway; CTP from UDP: step 2/2. Its activity is regulated as follows. Allosterically activated by GTP, when glutamine is the substrate; GTP has no effect on the reaction when ammonia is the substrate. The allosteric effector GTP functions by stabilizing the protein conformation that binds the tetrahedral intermediate(s) formed during glutamine hydrolysis. Inhibited by the product CTP, via allosteric rather than competitive inhibition. Functionally, catalyzes the ATP-dependent amination of UTP to CTP with either L-glutamine or ammonia as the source of nitrogen. Regulates intracellular CTP levels through interactions with the four ribonucleotide triphosphates. The sequence is that of CTP synthase from Shewanella sp. (strain MR-4).